A 142-amino-acid chain; its full sequence is Large ribosomal subunit protein uL22c (142 aa).

Belongs to the universal ribosomal protein uL22 family. As to quaternary structure, part of the 50S ribosomal subunit.

It is found in the plastid. Its subcellular location is the chloroplast. Functionally, this protein binds specifically to 23S rRNA. Its function is as follows. The globular domain of the protein is located near the polypeptide exit tunnel on the outside of the subunit, while an extended beta-hairpin is found that lines the wall of the exit tunnel in the center of the 70S ribosome. The protein is Large ribosomal subunit protein uL22c (rpl22) of Pinus thunbergii (Japanese black pine).